Reading from the N-terminus, the 62-residue chain is Large ribosomal subunit protein bL28 (62 aa).

This sequence belongs to the bacterial ribosomal protein bL28 family.

This is Large ribosomal subunit protein bL28 from Streptococcus gordonii (strain Challis / ATCC 35105 / BCRC 15272 / CH1 / DL1 / V288).